A 73-amino-acid chain; its full sequence is Protein SlyX homolog (73 aa).

It belongs to the SlyX family.

The chain is Protein SlyX homolog from Haemophilus ducreyi (strain 35000HP / ATCC 700724).